Here is a 378-residue protein sequence, read N- to C-terminus: Erythronate-4-phosphate dehydrogenase (378 aa).

Substrate-binding residues include S45 and T66. Residues D146 and T175 each contribute to the NAD(+) site. R208 is a catalytic residue. D232 contributes to the NAD(+) binding site. E237 is a catalytic residue. H254 serves as the catalytic Proton donor. G257 is a binding site for NAD(+). Y258 provides a ligand contact to substrate.

The protein belongs to the D-isomer specific 2-hydroxyacid dehydrogenase family. PdxB subfamily. Homodimer.

The protein resides in the cytoplasm. It catalyses the reaction 4-phospho-D-erythronate + NAD(+) = (R)-3-hydroxy-2-oxo-4-phosphooxybutanoate + NADH + H(+). The protein operates within cofactor biosynthesis; pyridoxine 5'-phosphate biosynthesis; pyridoxine 5'-phosphate from D-erythrose 4-phosphate: step 2/5. Its function is as follows. Catalyzes the oxidation of erythronate-4-phosphate to 3-hydroxy-2-oxo-4-phosphonooxybutanoate. In Escherichia coli O6:H1 (strain CFT073 / ATCC 700928 / UPEC), this protein is Erythronate-4-phosphate dehydrogenase.